Here is a 283-residue protein sequence, read N- to C-terminus: Polyamine aminopropyltransferase (283 aa).

Residues 5–238 (QTWIDEYHKG…GIWSWTFASS (234 aa)) form the PABS domain. Residue glutamine 32 participates in S-methyl-5'-thioadenosine binding. 2 residues coordinate spermidine: histidine 63 and aspartate 87. S-methyl-5'-thioadenosine is bound by residues glutamate 107 and 139-140 (DG). Aspartate 158 serves as the catalytic Proton acceptor. Spermidine is bound at residue 158 to 161 (DCSD).

It belongs to the spermidine/spermine synthase family. In terms of assembly, homodimer or homotetramer.

It is found in the cytoplasm. The enzyme catalyses S-adenosyl 3-(methylsulfanyl)propylamine + putrescine = S-methyl-5'-thioadenosine + spermidine + H(+). The protein operates within amine and polyamine biosynthesis; spermidine biosynthesis; spermidine from putrescine: step 1/1. Its function is as follows. Catalyzes the irreversible transfer of a propylamine group from the amino donor S-adenosylmethioninamine (decarboxy-AdoMet) to putrescine (1,4-diaminobutane) to yield spermidine. The polypeptide is Polyamine aminopropyltransferase (Prochlorococcus marinus (strain MIT 9301)).